The primary structure comprises 171 residues: PIDD1 alternative open reading frame protein (171 aa).

Disordered stretches follow at residues 1–22 (MSGLQGPSVGDGCNGGGARAGG) and 76–156 (ILAS…LCPA). The span at 84-99 (GPSAAGGHPGPAASEP) shows a compositional bias: low complexity.

As to quaternary structure, interacts with calpain-2 catalytic subunit CAPN2. Cleaved in vitro following UV irradiation to induce caspase-mediated apoptosis and this cleavage is inhibited by a broad-spectrum caspase inhibitor.

Its subcellular location is the cytoplasm. The protein localises to the cytoskeleton. The chain is PIDD1 alternative open reading frame protein from Homo sapiens (Human).